The following is a 291-amino-acid chain: MNRIQQTFQTSSAPFWYAQLELGFCYENSRTIMSHRKHYGPVRVQKMLWPEKTGVCHAIIVHPPAGIAGGDHLTFQIETERQAHAVITTPGAGKWYRTNGKHAFQHIYLNVKDDSILEWMPQETMLFDGALAHSETDIHLEQTASFIGWDMLVLGRQARAENFVQGSYHNQFKLWRKNKLLVADTLYFEGGDRWLSSCLGMNNQAVMASFWAVPPEKFRSSFYLEQHIELIRELIMRMDVPVTLTLLEDVLCARFLGNDVRRCHDAFAAIRAKLRRYWFDLDEEFPRIWKT.

It belongs to the UreD family. As to quaternary structure, ureD, UreF and UreG form a complex that acts as a GTP-hydrolysis-dependent molecular chaperone, activating the urease apoprotein by helping to assemble the nickel containing metallocenter of UreC. The UreE protein probably delivers the nickel.

It is found in the cytoplasm. Its function is as follows. Required for maturation of urease via the functional incorporation of the urease nickel metallocenter. The protein is Urease accessory protein UreD of Acinetobacter baumannii (strain ACICU).